A 201-amino-acid chain; its full sequence is Small ribosomal subunit protein uS4 (201 aa).

One can recognise an S4 RNA-binding domain in the interval 91 to 157 (SRLDNVIYRA…VPFQIARETA (67 aa)).

It belongs to the universal ribosomal protein uS4 family. In terms of assembly, part of the 30S ribosomal subunit. Contacts protein S5. The interaction surface between S4 and S5 is involved in control of translational fidelity.

Its function is as follows. One of the primary rRNA binding proteins, it binds directly to 16S rRNA where it nucleates assembly of the body of the 30S subunit. In terms of biological role, with S5 and S12 plays an important role in translational accuracy. The protein is Small ribosomal subunit protein uS4 of Mycobacterium tuberculosis (strain ATCC 25177 / H37Ra).